Reading from the N-terminus, the 363-residue chain is MAVDSSNSATGPMRVFAIGNPILDLVAEVPSSFLDEFFLKRGDATLATPEQMRIYSTLDQFNPTSLPGGSALNSVRVVQKLLRKPGSAGYMGAIGDDPRGQVLKELCDKEGLATRFMVAPGQSTGVCAVLINEKERTLCTHLGACGSFRLPEDWTTFASGALIFYATAYTLTATPKNALEVAGYAHGIPNAIFTLNLSAPFCVELYKDAMQSLLLHTNILFGNEEEFAHLAKVHNLVAAEKTALSTANKEHAVEVCTGALRLLTAGQNTGATKLVVMTRGHNPVIAAEQTADGTVVVHEVGVPVVAAEKIVDTNGAGDAFVGGFLYALSQGKTVKQCIMCGNACAQDVIQHVGFSLSFTSLPC.

Residues Ala185, Ile188, and Ala191 each contribute to the Mg(2+) site. Asp318 is an active-site residue.

The protein belongs to the carbohydrate kinase PfkB family. Mg(2+) is required as a cofactor.

It carries out the reaction adenosine + ATP = AMP + ADP + H(+). It participates in purine metabolism; AMP biosynthesis via salvage pathway; AMP from adenosine: step 1/1. Its function is as follows. ATP-dependent phosphorylation of adenosine and other related nucleoside analogs to monophosphate derivatives. It is a key purine metabolic enzyme in the opportunistic parasitic protozoan toxoplasma gondii as it cannot synthesize purines de novo. This chain is Adenosine kinase (AK), found in Toxoplasma gondii.